The following is a 131-amino-acid chain: Protein anoxia up-regulated (131 aa).

The segment covering 1–24 (MVYESGFTTRRTYSSRPVTTSYAV) has biased composition (polar residues). A disordered region spans residues 1–121 (MVYESGFTTR…STTSGNLPGG (121 aa)). Composition is skewed to low complexity over residues 44 to 53 (SSDYSYTSKS) and 98 to 116 (TSTT…TTSG).

As to expression, concentrated in lamina neurons, first optic lobe neurons and cortical neurons of central brain.

Plays an important role in the regulation of tissue responsiveness to oxygen deprivation. The polypeptide is Protein anoxia up-regulated (Drosophila melanogaster (Fruit fly)).